A 265-amino-acid polypeptide reads, in one-letter code: Putative 2-aminoethylphosphonate transport system permease protein PhnV (265 aa).

6 helical membrane-spanning segments follow: residues 13 to 33, 69 to 89, 104 to 124, 131 to 151, 185 to 205, and 233 to 253; these read GVVA…VILM, LTIG…AALA, VFYL…LVAF, MNGT…AFTF, LPLL…LSMG, and NIAD…LLMM. Residues 65–253 enclose the ABC transmembrane type-1 domain; it reads LLASLTIGFC…LVAITLLLMM (189 aa).

This sequence belongs to the binding-protein-dependent transport system permease family.

It is found in the cell inner membrane. Functionally, probably part of the PhnSTUV complex (TC 3.A.1.11.5) involved in 2-aminoethylphosphonate import. Probably responsible for the translocation of the substrate across the membrane. This chain is Putative 2-aminoethylphosphonate transport system permease protein PhnV (phnV), found in Salmonella typhimurium (strain LT2 / SGSC1412 / ATCC 700720).